A 132-amino-acid chain; its full sequence is Small ribosomal subunit protein uS8 (132 aa).

The protein belongs to the universal ribosomal protein uS8 family. As to quaternary structure, part of the 30S ribosomal subunit. Contacts proteins S5 and S12.

In terms of biological role, one of the primary rRNA binding proteins, it binds directly to 16S rRNA central domain where it helps coordinate assembly of the platform of the 30S subunit. The polypeptide is Small ribosomal subunit protein uS8 (Anaeromyxobacter dehalogenans (strain 2CP-C)).